A 287-amino-acid chain; its full sequence is Protein PXR1 (287 aa).

Residues 25–72 form the G-patch domain; the sequence is TSRFGHLQLEKFGWKPGMGLGMSPTSSHKTHIKVSIKDDNLGLGAKIK. Over residues 143–155 the composition is skewed to basic and acidic residues; it reads LKSYSNDKKRSRD. The interval 143 to 254 is disordered; that stretch reads LKSYSNDKKR…TTASNIPSTV (112 aa). Basic residues predominate over residues 163–190; the sequence is SKNKSKKQKKDKKDKKDKKDKKDKKDKK. Residues 191–200 are compositionally biased toward basic and acidic residues; that stretch reads DKKDKTEKKE. The segment covering 201-220 has biased composition (basic residues); it reads KKEKKEKKEKKEKKDKKDKK. Positions 221 to 230 are enriched in basic and acidic residues; it reads DKKDKIDKKD. Polar residues predominate over residues 239-251; the sequence is NNIEVSTTASNIP.

Belongs to the PINX1 family.

It is found in the nucleus. Its subcellular location is the nucleolus. Involved in rRNA-processing at A0, A1 and A2 sites and negatively regulates telomerase. This Vanderwaltozyma polyspora (strain ATCC 22028 / DSM 70294 / BCRC 21397 / CBS 2163 / NBRC 10782 / NRRL Y-8283 / UCD 57-17) (Kluyveromyces polysporus) protein is Protein PXR1 (PXR1).